The following is a 324-amino-acid chain: DNA repair and recombination protein RadA (324 aa).

Residue 114-121 (GEFGSGKT) participates in ATP binding.

It belongs to the eukaryotic RecA-like protein family.

Its function is as follows. Involved in DNA repair and in homologous recombination. Binds and assemble on single-stranded DNA to form a nucleoprotein filament. Hydrolyzes ATP in a ssDNA-dependent manner and promotes DNA strand exchange between homologous DNA molecules. This chain is DNA repair and recombination protein RadA, found in Metallosphaera sedula (strain ATCC 51363 / DSM 5348 / JCM 9185 / NBRC 15509 / TH2).